A 158-amino-acid chain; its full sequence is Small ribosomal subunit protein uS10m (158 aa).

This sequence belongs to the universal ribosomal protein uS10 family.

The protein localises to the mitochondrion. This is Small ribosomal subunit protein uS10m (mrps-10) from Caenorhabditis briggsae.